The chain runs to 480 residues: Proline--tRNA ligase (480 aa).

Belongs to the class-II aminoacyl-tRNA synthetase family. ProS type 3 subfamily. As to quaternary structure, homodimer.

The protein localises to the cytoplasm. It catalyses the reaction tRNA(Pro) + L-proline + ATP = L-prolyl-tRNA(Pro) + AMP + diphosphate. Its function is as follows. Catalyzes the attachment of proline to tRNA(Pro) in a two-step reaction: proline is first activated by ATP to form Pro-AMP and then transferred to the acceptor end of tRNA(Pro). The polypeptide is Proline--tRNA ligase (Roseiflexus sp. (strain RS-1)).